Here is a 589-residue protein sequence, read N- to C-terminus: Cysteine/serine-rich nuclear protein 1 (589 aa).

2 disordered regions span residues 1-62 (MTGL…RDFC) and 309-388 (FREL…GVDD). 2 stretches are compositionally biased toward low complexity: residues 17-41 (SSVSSSSSSSGCQSRSCSPSSSVSR) and 345-368 (DNSCSSDMTDSSTASSSASGTSEA).

The protein belongs to the AXUD1 family. In terms of tissue distribution, ubiquitous. Most abundantly expressed in lung, placenta, skeletal muscle, pancreas and leukocyte. Frequently down-regulated in lung, kidney, liver and colon cancers compared with their corresponding normal tissues.

The protein localises to the nucleus. In terms of biological role, binds to the consensus sequence 5'-AGAGTG-3' and has transcriptional activator activity. May have a tumor-suppressor function. May play a role in apoptosis. The sequence is that of Cysteine/serine-rich nuclear protein 1 (CSRNP1) from Homo sapiens (Human).